A 451-amino-acid chain; its full sequence is Chromosomal replication initiator protein DnaA (451 aa).

Residues 1–72 (MQSIEDIWQE…ANILQEITGR (72 aa)) form a domain I, interacts with DnaA modulators region. The domain II stretch occupies residues 72–108 (RLFDVRFIDGEQEENFEYTVIKPNPALDEDGVEIGKH). The tract at residues 109–325 (MLNPRYVFDT…GALIRVVAYS (217 aa)) is domain III, AAA+ region. The ATP site is built by Gly153, Gly155, Lys156, and Thr157. Residues 326 to 451 (SLVNKDITAG…KNLRKAQNMF (126 aa)) form a domain IV, binds dsDNA region.

It belongs to the DnaA family. Oligomerizes as a right-handed, spiral filament on DNA at oriC.

The protein resides in the cytoplasm. Functionally, plays an essential role in the initiation and regulation of chromosomal replication. ATP-DnaA binds to the origin of replication (oriC) to initiate formation of the DNA replication initiation complex once per cell cycle. Binds the DnaA box (a 9 base pair repeat at the origin) and separates the double-stranded (ds)DNA. Forms a right-handed helical filament on oriC DNA; dsDNA binds to the exterior of the filament while single-stranded (ss)DNA is stabiized in the filament's interior. The ATP-DnaA-oriC complex binds and stabilizes one strand of the AT-rich DNA unwinding element (DUE), permitting loading of DNA polymerase. After initiation quickly degrades to an ADP-DnaA complex that is not apt for DNA replication. Binds acidic phospholipids. This Listeria monocytogenes serotype 4b (strain CLIP80459) protein is Chromosomal replication initiator protein DnaA.